A 473-amino-acid polypeptide reads, in one-letter code: Cysteine--tRNA ligase (473 aa).

Cys29 serves as a coordination point for Zn(2+). Residues 31–41 (ATVQSAPHIGH) carry the 'HIGH' region motif. Zn(2+) is bound by residues Cys207, His232, and Glu236. The 'KMSKS' region signature appears at 263 to 267 (KMSKS). Position 266 (Lys266) interacts with ATP.

It belongs to the class-I aminoacyl-tRNA synthetase family. As to quaternary structure, monomer. The cofactor is Zn(2+).

It localises to the cytoplasm. It catalyses the reaction tRNA(Cys) + L-cysteine + ATP = L-cysteinyl-tRNA(Cys) + AMP + diphosphate. This chain is Cysteine--tRNA ligase, found in Corynebacterium kroppenstedtii (strain DSM 44385 / JCM 11950 / CIP 105744 / CCUG 35717).